The primary structure comprises 253 residues: uncharacterized protein (253 aa).

NADP(+) is bound at residue 6–30 (IITASDSGIGKECALLLAQQGFDIG). A substrate-binding site is contributed by S140. The active-site Proton acceptor is Y153.

This sequence belongs to the short-chain dehydrogenases/reductases (SDR) family.

This is an uncharacterized protein from Escherichia coli (strain K12).